An 84-amino-acid chain; its full sequence is Anaphase-promoting complex subunit 11 (84 aa).

Cys23, Cys26, Cys34, Cys37, Cys44, Cys51, His53, His56, His58, Cys59, Cys73, and Cys76 together coordinate Zn(2+). The RING-type zinc finger occupies Cys34–Arg77.

The protein belongs to the RING-box family. In terms of assembly, the mammalian APC/C is composed at least of 14 distinct subunits ANAPC1, ANAPC2, CDC27/APC3, ANAPC4, ANAPC5, CDC16/APC6, ANAPC7, CDC23/APC8, ANAPC10, ANAPC11, CDC26/APC12, ANAPC13, ANAPC15 and ANAPC16 that assemble into a complex of at least 19 chains with a combined molecular mass of around 1.2 MDa; APC/C interacts with FZR1 and FBXO5. Interacts with the cullin domain of ANAPC2. Interacts with UBE2D2. Post-translationally, auto-ubiquitinated. Expressed at high levels in skeletal muscle and heart; in moderate levels in brain, kidney, and liver; and at low levels in colon, thymus, spleen, small intestine, placenta, lung and peripheral blood leukocyte.

The protein resides in the cytoplasm. It is found in the nucleus. Its pathway is protein modification; protein ubiquitination. In terms of biological role, together with the cullin protein ANAPC2, constitutes the catalytic component of the anaphase promoting complex/cyclosome (APC/C), a cell cycle-regulated E3 ubiquitin ligase that controls progression through mitosis and the G1 phase of the cell cycle. The APC/C complex acts by mediating ubiquitination and subsequent degradation of target proteins: it mainly mediates the formation of 'Lys-11'-linked polyubiquitin chains and, to a lower extent, the formation of 'Lys-48'- and 'Lys-63'-linked polyubiquitin chains. The APC/C complex catalyzes assembly of branched 'Lys-11'-/'Lys-48'-linked branched ubiquitin chains on target proteins. May recruit the E2 ubiquitin-conjugating enzymes to the complex. This Homo sapiens (Human) protein is Anaphase-promoting complex subunit 11 (ANAPC11).